The following is a 145-amino-acid chain: 3-dehydroquinate dehydratase (145 aa).

Catalysis depends on Tyr-24, which acts as the Proton acceptor. Substrate is bound by residues Asn-75, His-81, and Asp-88. His-101 acts as the Proton donor in catalysis. Residues 102–103 (IS) and Arg-112 contribute to the substrate site.

Belongs to the type-II 3-dehydroquinase family. Homododecamer.

The enzyme catalyses 3-dehydroquinate = 3-dehydroshikimate + H2O. The protein operates within metabolic intermediate biosynthesis; chorismate biosynthesis; chorismate from D-erythrose 4-phosphate and phosphoenolpyruvate: step 3/7. Functionally, catalyzes a trans-dehydration via an enolate intermediate. This Rhizobium etli (strain CIAT 652) protein is 3-dehydroquinate dehydratase.